Here is a 501-residue protein sequence, read N- to C-terminus: Lysine--tRNA ligase (501 aa).

Mg(2+)-binding residues include Glu411 and Glu418.

The protein belongs to the class-II aminoacyl-tRNA synthetase family. As to quaternary structure, homodimer. Requires Mg(2+) as cofactor.

The protein localises to the cytoplasm. It carries out the reaction tRNA(Lys) + L-lysine + ATP = L-lysyl-tRNA(Lys) + AMP + diphosphate. This Aliivibrio salmonicida (strain LFI1238) (Vibrio salmonicida (strain LFI1238)) protein is Lysine--tRNA ligase.